Here is a 154-residue protein sequence, read N- to C-terminus: MGLSDDEWNHVLGIWAKVEPDLSAHGQEVIIRLFQLHPETQERFAKFKNLTTIDALKSSEEVKKHGTTVLTALGRILKQKNNHEQELKPLAESHATKHKIPVKYLEFICEIIVKVIAEKHPSDFGADSQAAMKKALELFRNDMASKYKEFGFQG.

The Globin domain maps to 2-148 (GLSDDEWNHV…FRNDMASKYK (147 aa)). A nitrite-binding site is contributed by histidine 65. Residue histidine 65 participates in O2 binding. Histidine 94 is a heme b binding site.

Belongs to the globin family. As to quaternary structure, monomeric.

The protein resides in the cytoplasm. The protein localises to the sarcoplasm. It catalyses the reaction Fe(III)-heme b-[protein] + nitric oxide + H2O = Fe(II)-heme b-[protein] + nitrite + 2 H(+). The catalysed reaction is H2O2 + AH2 = A + 2 H2O. Functionally, monomeric heme protein which primary function is to store oxygen and facilitate its diffusion within muscle tissues. Reversibly binds oxygen through a pentacoordinated heme iron and enables its timely and efficient release as needed during periods of heightened demand. Depending on the oxidative conditions of tissues and cells, and in addition to its ability to bind oxygen, it also has a nitrite reductase activity whereby it regulates the production of bioactive nitric oxide. Under stress conditions, like hypoxia and anoxia, it also protects cells against reactive oxygen species thanks to its pseudoperoxidase activity. The sequence is that of Myoglobin (MB) from Caretta caretta (Loggerhead sea turtle).